The primary structure comprises 681 residues: Terpene synthase 6, chloroplastic (681 aa).

Mg(2+) is bound by residues Asp-433, Asp-437, Asn-577, and Glu-585. A DDXXD motif motif is present at residues 433-437; sequence DDLFD.

The protein belongs to the terpene synthase family. The cofactor is Mg(2+). In terms of tissue distribution, expressed in leaves.

It is found in the plastid. It localises to the chloroplast. The protein operates within secondary metabolite biosynthesis; terpenoid biosynthesis. In terms of biological role, may be involved in the biosynthesis of ent-kaurene diterpenoids natural products such as oridonin, miltiradiene, eriocalyxin B and nezukol, known to exhibit antitumor, anti-inflammatory and antibacterial activities. The chain is Terpene synthase 6, chloroplastic from Isodon rubescens (Rabdosia rubescens).